A 423-amino-acid chain; its full sequence is UDP-N-acetylglucosamine 1-carboxyvinyltransferase 1 (423 aa).

Residue 23–24 participates in phosphoenolpyruvate binding; the sequence is KN. Residue Arg96 coordinates UDP-N-acetyl-alpha-D-glucosamine. Cys120 (proton donor) is an active-site residue. A 2-(S-cysteinyl)pyruvic acid O-phosphothioketal modification is found at Cys120. UDP-N-acetyl-alpha-D-glucosamine-binding residues include Asp309 and Val331.

This sequence belongs to the EPSP synthase family. MurA subfamily.

It is found in the cytoplasm. The catalysed reaction is phosphoenolpyruvate + UDP-N-acetyl-alpha-D-glucosamine = UDP-N-acetyl-3-O-(1-carboxyvinyl)-alpha-D-glucosamine + phosphate. It participates in cell wall biogenesis; peptidoglycan biosynthesis. In terms of biological role, cell wall formation. Adds enolpyruvyl to UDP-N-acetylglucosamine. This chain is UDP-N-acetylglucosamine 1-carboxyvinyltransferase 1, found in Streptococcus pyogenes serotype M1.